The chain runs to 542 residues: MAGQTTVDSRRQPPEEVDVLVVGAGFSGLYALYRLRELGRSVHVIETAGDVGGVWYWNRYPGARCDIESIEYCYSFSEEVLQEWNWTERYASQPEILRYINFVADKFDLRSGITFHTTVTAAAFDEATNTWTVDTNHGDRIRARYLIMASGQLSVPQLPNFPGLKDFAGNLYHTGNWPHEPVDFSGQRVGVIGTGSSGIQVSPQIAKQAAELFVFQRTPHFAVPARNAPLDPEFLADLKKRYAEFREESRNTPGGTHRYQGPKSALEVSDEELVETLERYWQEGGPDILAAYRDILRDRDANERVAEFIRNKIRNTVRDPEVAERLVPKGYPFGTKRLILEIDYYEMFNRDNVHLVDTLSAPIETITPRGVRTSEREYELDSLVLATGFDALTGALFKIDIRGVGNVALKEKWAAGPRTYLGLSTAGFPNLFFIAGPGSPSALSNMLVSIEQHVEWVTDHIAYMFKNGLTRSEAVLEKEDEWVEHVNEIADETLYPMTASWYTGANVPGKPRVFMLYVGGFHRYRQICDEVAAKGYEGFVLT.

Residues serine 27, glutamate 46, 54-57 (VWYW), aspartate 66, tyrosine 72, valine 119, and glutamine 152 contribute to the FAD site. An NADP(+)-binding site is contributed by 64-66 (RCD). NADP(+) is bound by residues 194-200 (TGSSGIQ), 217-218 (RT), and 336-337 (KR). FAD is bound at residue methionine 446. An NADP(+)-binding site is contributed by tryptophan 501.

It belongs to the FAD-binding monooxygenase family. In terms of assembly, monomer. FAD is required as a cofactor.

It catalyses the reaction phenylacetone + NADPH + O2 + H(+) = benzyl acetate + NADP(+) + H2O. In terms of biological role, catalyzes a Baeyer-Villiger oxidation reaction, i.e. the insertion of an oxygen atom into a carbon-carbon bond adjacent to a carbonyl, which converts ketones to esters. Is most efficient with phenylacetone as substrate, leading to the formation of benzyl acetate. Can also oxidize other aromatic ketones (benzylacetone, alpha-methylphenylacetone and 4-hydroxyacetophenone), some aliphatic ketones (dodecan-2-one and bicyclohept-2-en-6-one) and sulfides (e.g. methyl 4-tolylsulfide). This Thermobifida fusca (strain YX) protein is Phenylacetone monooxygenase (pamO).